The following is an 881-amino-acid chain: MNASPVRLLILRRQLATHPAILYSSPYIKSPLVHLHSRMSNVHRSAHANALSFVITRRSISHFPKIISKIIRLPIYVGGGMAAAGSYIAYKMEEASSFTKDKLDRIKDLGESMKEKFNKMFSGDKSQDGGHGNDGTVPTATLIAATSLDDDESKRQGDPKDDDDEDDDDEDDENDSVDTTQDEMLNLTKQMIEIRTILNKVDSSSAHLTLPSIVVIGSQSSGKSSVLESIVGREFLPKGSNMVTRRPIELTLVNTPNSNNVTADFPSMRLYNIKDFKEVKRMLMELNMAVPTSEAVSEEPIQLTIKSSRVPDLSLVDLPGYIQVEAADQPIELKTKIRDLCEKYLTAPNIILAISAADVDLANSSALKASKAADPKGLRTIGVITKLDLVDPEKARSILNNKKYPLSMGYVGVITKTPSSINRKHLGLFGEAPSSSLSGIFSKGQHGQSSGEENTNGLKQIVSHQFEKAYFKENKKYFTNCQVSTKKLREKLIKILEISMSNALEPTSTLIQQELDDTSYLFKVEFNDRHLTPKSYLLNNIDVLKLGIKEFQEKFHRNELKSILRAELDQKVLDVLATRYWKDDNLQDLSSSKLESDTDMLYWHKKLELASSGLTKMGIGRLSTMLTTNAILKELDNILESTQLKNHELIKDLVSNTAINVLNSKYYSTADQVENCIKPFKYEIDLEERDWSLARQHSINLIKEELRQCNSRYQAIKNAVGSKKLANVMGYLENESNLQKETLGMSKLLLERGSEAIFLDKRCKVLSFRLKMLKNKCHSTIEKDRCPEVFLSAVSDKLTSTAVLFLNVELLSDFFYNFPIELDRRLTLLGDEQVEMFAKEDPKISRHIELQKRKELLELALEKIDSILVFKKSYKGVSKNL.

Residues 1–59 (MNASPVRLLILRRQLATHPAILYSSPYIKSPLVHLHSRMSNVHRSAHANALSFVITRRS) constitute a mitochondrion transit peptide. Topologically, residues 60 to 72 (ISHFPKIISKIIR) are mitochondrial matrix. Residues 73-92 (LPIYVGGGMAAAGSYIAYKM) traverse the membrane as a helical; Signal-anchor for type II membrane protein segment. The Mitochondrial intermembrane segment spans residues 93 to 881 (EEASSFTKDK…KSYKGVSKNL (789 aa)). Residues 145-183 (ATSLDDDESKRQGDPKDDDDEDDDDEDDENDSVDTTQDE) are disordered. The segment covering 160–176 (KDDDDEDDDDEDDENDS) has biased composition (acidic residues). The 299-residue stretch at 207–505 (HLTLPSIVVI…LEISMSNALE (299 aa)) folds into the Dynamin-type G domain. Residues 217–224 (GSQSSGKS) are G1 motif. GTP-binding residues include Ser-220, Ser-221, Gly-222, Lys-223, Ser-224, Ser-225, and Gly-239. Ser-224 serves as a coordination point for Mg(2+). A G2 motif region spans residues 243–245 (VTR). Positions 244 and 317 each coordinate Mg(2+). The tract at residues 317–320 (DLPG) is G3 motif. Residues 385-388 (TKLD) form a G4 motif region. Lys-386, Asp-388, and Thr-415 together coordinate GTP. The G5 motif stretch occupies residues 414–417 (ITKT). Positions 668-780 (STADQVENCI…KMLKNKCHST (113 aa)) are paddle region. A disulfide bridge links Cys-777 with Cys-786. In terms of domain architecture, GED spans 780 to 872 (TIEKDRCPEV…KIDSILVFKK (93 aa)).

The protein belongs to the TRAFAC class dynamin-like GTPase superfamily. Dynamin/Fzo/YdjA family. In terms of assembly, oligomeric complex consisting of membrane-bound and soluble forms of MGM1. Associates with FZO1 through interaction with the intermembrane space domain of UGO1 which binds FZO1 through its cytoplasmic domain. Cleavage of the transit peptide by mitochondrial processing protease (MPP) produces a long integral membrane form of MGM1 (l-MGM1). Further processing by the rhomboid protease PCP1 produces a short peripheral membrane form of MGM1 (s-MGM1). Both isoforms are required for full activity.

It is found in the mitochondrion inner membrane. The protein resides in the mitochondrion intermembrane space. It carries out the reaction GTP + H2O = GDP + phosphate + H(+). Functionally, dynamin-related GTPase that is essential for normal mitochondrial morphology by mediating fusion of the mitochondrial inner membranes, regulating cristae morphology and maintaining respiratory chain function. Exists in two forms: the transmembrane, long form (Dynamin-like GTPase MGM1, long form; L-MGM1), which is tethered to the inner mitochondrial membrane, and the short soluble form (Dynamin-like GTPase MGM1, short form; S-MGM1), which results from proteolytic cleavage and localizes in the intermembrane space. Both forms (L-MGM1 and S-MGM1) cooperate to catalyze the fusion of the mitochondrial inner membrane. The equilibrium between L-MGM1 and S-MGM1 is essential: excess levels of S-MGM1, following loss of mitochondrial membrane potential, lead to an impaired equilibrium between L-MGM1 and S-MGM1, inhibiting mitochondrial fusion. Plays a role in the maintenance and remodeling of mitochondrial cristae, some invaginations of the mitochondrial inner membrane that provide an increase in the surface area. Probably acts by forming helical filaments at the inside of inner membrane tubes with the shape and dimensions of crista junctions. Constitutes the transmembrane long form (L-MGM1) that plays a central role in mitochondrial inner membrane fusion and cristae morphology. L-MGM1 and the soluble short form (S-MGM1) form higher-order helical assemblies that coordinate the fusion of mitochondrial inner membranes. Inner membrane-anchored L-MGM1 molecules initiate membrane remodeling by recruiting soluble S-MGM1 to rapidly polymerize into a flexible cylindrical scaffold encaging the mitochondrial inner membrane. Once at the membrane surface, the formation of S-MGM1 helices induce bilayer curvature. MGM1 dimerization through the paddle region, which inserts into cardiolipin-containing membrane, promotes GTP hydrolysis and the helical assembly of a flexible MGM1 lattice on the membrane, which drives membrane curvature and mitochondrial fusion. In terms of biological role, constitutes the soluble short form (S-MGM1) generated by cleavage by PCP1, which plays a central role in mitochondrial inner membrane fusion and cristae morphology. The transmembrane long form (L-MGM1) and the S-MGM1 form higher-order helical assemblies that coordinate the fusion of mitochondrial inner membranes. Inner membrane-anchored L-MGM1 molecules initiate membrane remodeling by recruiting soluble S-MGM1 to rapidly polymerize into a flexible cylindrical scaffold encaging the mitochondrial inner membrane. Once at the membrane surface, the formation of S-MGM1 helices induce bilayer curvature. MGM1 dimerization through the paddle region, which inserts into cardiolipin-containing membrane, promotes GTP hydrolysis and the helical assembly of a flexible MGM1 lattice on the membrane, which drives membrane curvature and mitochondrial fusion. Excess levels of S-MGM1 produced by cleavage by PCP1 following stress conditions that induce loss of mitochondrial membrane potential, lead to an impaired equilibrium between L-MGM1 and S-MGM1, thereby inhibiting mitochondrial fusion. The chain is Dynamin-like GTPase MGM1, mitochondrial from Saccharomyces cerevisiae (strain ATCC 204508 / S288c) (Baker's yeast).